The primary structure comprises 471 residues: Mitochondrial distribution and morphology protein 10 (471 aa).

Residues 313–338 (SNSAATPPRIKNSDSQVLSNNSTDSK) form a disordered region. The span at 325-338 (SDSQVLSNNSTDSK) shows a compositional bias: polar residues.

The protein belongs to the MDM10 family. In terms of assembly, component of the ER-mitochondria encounter structure (ERMES) or MDM complex, composed of MMM1, MDM10, MDM12 and MDM34. Associates with the mitochondrial outer membrane sorting assembly machinery SAM(core) complex.

The protein localises to the mitochondrion outer membrane. Its function is as follows. Component of the ERMES/MDM complex, which serves as a molecular tether to connect the endoplasmic reticulum and mitochondria. Components of this complex are involved in the control of mitochondrial shape and protein biogenesis and may function in phospholipid exchange. MDM10 is involved in the late assembly steps of the general translocase of the mitochondrial outer membrane (TOM complex). Functions in the TOM40-specific route of the assembly of outer membrane beta-barrel proteins, including the association of TOM40 with the receptor TOM22 and small TOM proteins. Can associate with the SAM(core) complex as well as the MDM12-MMM1 complex, both involved in late steps of the major beta-barrel assembly pathway, that is responsible for biogenesis of all outer membrane beta-barrel proteins. May act as a switch that shuttles between both complexes and channels precursor proteins into the TOM40-specific pathway. Plays a role in mitochondrial morphology and in the inheritance of mitochondria. The sequence is that of Mitochondrial distribution and morphology protein 10 from Debaryomyces hansenii (strain ATCC 36239 / CBS 767 / BCRC 21394 / JCM 1990 / NBRC 0083 / IGC 2968) (Yeast).